Reading from the N-terminus, the 392-residue chain is Imidazolonepropionase (392 aa).

Residues His-69 and His-71 each contribute to the Fe(3+) site. Residues His-69 and His-71 each coordinate Zn(2+). 3 residues coordinate 4-imidazolone-5-propanoate: Arg-78, Tyr-136, and His-163. Position 136 (Tyr-136) interacts with N-formimidoyl-L-glutamate. His-226 contacts Fe(3+). A Zn(2+)-binding site is contributed by His-226. Gln-229 provides a ligand contact to 4-imidazolone-5-propanoate. Asp-302 lines the Fe(3+) pocket. Asp-302 is a Zn(2+) binding site. N-formimidoyl-L-glutamate-binding residues include Asn-304 and Gly-306. Ser-307 contributes to the 4-imidazolone-5-propanoate binding site.

It belongs to the metallo-dependent hydrolases superfamily. HutI family. Requires Zn(2+) as cofactor. It depends on Fe(3+) as a cofactor.

The protein resides in the cytoplasm. The catalysed reaction is 4-imidazolone-5-propanoate + H2O = N-formimidoyl-L-glutamate. It participates in amino-acid degradation; L-histidine degradation into L-glutamate; N-formimidoyl-L-glutamate from L-histidine: step 3/3. Catalyzes the hydrolytic cleavage of the carbon-nitrogen bond in imidazolone-5-propanoate to yield N-formimidoyl-L-glutamate. It is the third step in the universal histidine degradation pathway. The chain is Imidazolonepropionase from Salinispora tropica (strain ATCC BAA-916 / DSM 44818 / JCM 13857 / NBRC 105044 / CNB-440).